Consider the following 294-residue polypeptide: UPF0282 protein APE_0500.1 (294 aa).

It belongs to the UPF0282 family.

The sequence is that of UPF0282 protein APE_0500.1 from Aeropyrum pernix (strain ATCC 700893 / DSM 11879 / JCM 9820 / NBRC 100138 / K1).